A 150-amino-acid polypeptide reads, in one-letter code: Arginine repressor (150 aa).

Belongs to the ArgR family.

The protein resides in the cytoplasm. The protein operates within amino-acid biosynthesis; L-arginine biosynthesis [regulation]. In terms of biological role, regulates arginine biosynthesis genes. The polypeptide is Arginine repressor (Carboxydothermus hydrogenoformans (strain ATCC BAA-161 / DSM 6008 / Z-2901)).